The primary structure comprises 555 residues: CCR4-NOT transcription complex subunit 6-like (555 aa).

Residues 1-152 (MRLIGMPKEK…NLYQDPDGTR (152 aa)) form a required for interaction with CNOT1, CNOT3 and CNOT7 region. LRR repeat units follow at residues 57–78 (HLTALHLNDNYLSRIPPDIAKL), 80–101 (NLVYLDLSSNKLRSLPAELGNM), 103–125 (SLRELLLNNNLLRVLPYELGRLF), and 126–148 (QLQTLGLKGNPLSQDILNLYQDP). The interval 158 to 555 (MLDNLAVHPE…VNGVHLPNRR (398 aa)) is nuclease domain. A Mg(2+)-binding site is contributed by Glu240. 4 residues coordinate substrate: Glu240, Glu276, His360, and Pro365. Asp410 contacts Mg(2+). Asp410 acts as the Proton donor/acceptor in catalysis. Substrate is bound by residues Asn412, Asn479, and Phe484.

This sequence belongs to the CCR4/nocturin family. As to quaternary structure, component of the CCR4-NOT complex; distinct complexes seem to exist that differ in the participation of probably mutually exclusive catalytic subunits; the complex contains two deadenylase subunits, CNOT6 or CNOT6L, and CNOT7 or CNOT8. Interacts with CNOT1, CNOT3, CNOT7, CNOT8 and CNOT9. Interacts with TOB1. Interacts with NANOS2. Interacts with ZFP36. Interacts with ZFP36L2. Interacts with RBM46. Requires Mg(2+) as cofactor. In terms of tissue distribution, highly expressed in placenta, skeletal muscle, pancreas, testis and leukocytes. Weakly expressed in heart, spleen and thymus.

Its subcellular location is the cytoplasm. The protein localises to the nucleus. It carries out the reaction Exonucleolytic cleavage of poly(A) to 5'-AMP.. Its activity is regulated as follows. Inhibited by free AMP, and with lesser efficiency also by CMP, GMP, UMP, ATP and neomycin. Its function is as follows. Has 3'-5' poly(A) exoribonuclease activity for synthetic poly(A) RNA substrate. Catalytic component of the CCR4-NOT complex which is one of the major cellular mRNA deadenylases and is linked to various cellular processes including bulk mRNA degradation, miRNA-mediated repression, translational repression during translational initiation and general transcription regulation. Additional complex functions may be a consequence of its influence on mRNA expression. May be involved in the deadenylation-dependent degradation of mRNAs through the 3'-UTR AU-rich element-mediated mechanism. Involved in deadenylation-dependent degradation of CDKN1B mRNA. Its mRNA deadenylase activity can be inhibited by TOB1. Mediates cell proliferation and cell survival and prevents cellular senescence. The sequence is that of CCR4-NOT transcription complex subunit 6-like (CNOT6L) from Homo sapiens (Human).